A 90-amino-acid polypeptide reads, in one-letter code: Progonadoliberin-3 (90 aa).

The N-terminal stretch at 1–23 is a signal peptide; sequence MEAGSRVIMQVLLLALVVQVTLS. Gln24 is modified (pyrrolidone carboxylic acid). Gly33 is subject to Glycine amide.

Belongs to the GnRH family. In terms of tissue distribution, expressed only in the terminal nerve nucleus of the telencephalon.

It localises to the secreted. Stimulates the secretion of gonadotropins. The protein is Progonadoliberin-3 (gnrh3) of Haplochromis burtoni (Burton's mouthbrooder).